Here is a 170-residue protein sequence, read N- to C-terminus: Calcineurin subunit B type 2 (170 aa).

Glycine 2 is lipidated: N-myristoyl glycine. EF-hand domains lie at 18-46, 50-85, 87-122, and 128-163; these read DEIK…FMSL, RHNP…FSVK, DEEQ…MVGN, and QLQQ…LEIH. Aspartate 31, aspartate 33, serine 35, serine 37, glutamate 42, aspartate 63, aspartate 65, aspartate 67, glutamate 69, glutamate 74, aspartate 100, aspartate 102, aspartate 104, tyrosine 106, and glutamate 111 together coordinate Ca(2+). The calcineurin A binding stretch occupies residues 131-136; sequence QLVDKT. Ca(2+) contacts are provided by aspartate 141, aspartate 143, aspartate 145, lysine 147, and glutamate 152.

Belongs to the calcineurin regulatory subunit family. As to quaternary structure, forms a complex composed of a calmodulin-dependent catalytic subunit (also known as calcineurin A) and a regulatory Ca(2+)-binding subunit (also known as calcineurin B). There are three catalytic subunits, each encoded by a separate gene (PPP3CA, PPP3CB, and PPP3CC) and two regulatory subunits which are also encoded by separate genes (PPP3R1 and PPP3R2). Interacts with SPATA33 (via PQIIIT motif). As to expression, testis-specific.

The protein localises to the mitochondrion. In terms of biological role, regulatory subunit of calcineurin, a calcium-dependent, calmodulin stimulated protein phosphatase. Confers calcium sensitivity. This Homo sapiens (Human) protein is Calcineurin subunit B type 2 (PPP3R2).